We begin with the raw amino-acid sequence, 321 residues long: CPX chromosomal region candidate gene 1 protein homolog (321 aa).

The segment at 1–83 is disordered; the sequence is MSSPTKEGSD…TEIQKDQREE (83 aa). 2 stretches are compositionally biased toward polar residues: residues 21–32 and 44–60; these read NEPSNDCTTDIE and VETN…TSQE.

This Macaca fascicularis (Crab-eating macaque) protein is CPX chromosomal region candidate gene 1 protein homolog (CPXCR1).